We begin with the raw amino-acid sequence, 458 residues long: Phosphoglucosamine mutase (458 aa).

Ser-108 functions as the Phosphoserine intermediate in the catalytic mechanism. Residues Ser-108, Asp-247, Asp-249, and Asp-251 each contribute to the Mg(2+) site. The residue at position 108 (Ser-108) is a Phosphoserine.

Belongs to the phosphohexose mutase family. The cofactor is Mg(2+). Post-translationally, activated by phosphorylation.

It carries out the reaction alpha-D-glucosamine 1-phosphate = D-glucosamine 6-phosphate. Catalyzes the conversion of glucosamine-6-phosphate to glucosamine-1-phosphate. The polypeptide is Phosphoglucosamine mutase (Thiobacillus denitrificans (strain ATCC 25259 / T1)).